The following is a 547-amino-acid chain: Apolipoprotein N-acyltransferase (547 aa).

The next 6 membrane-spanning stretches (helical) occupy residues 31 to 51 (PLPAWSLAPVQVIALAVAAHA), 65 to 85 (GWLFAMFSFSLGLYWLYVSMH), 89 to 109 (GLAAPLAAAGVLALSAFLALF), 144 to 164 (AACWAALEWLRAVVLTGFPWL), 181 to 201 (LLGVHGMALLAAFAAAALAGL), and 215 to 235 (LAAGVALLLAGAGWLLGQFSW). The CN hydrolase domain maps to 248–511 (VQGNVEQSQK…AGVLPVAVQG (264 aa)). Glutamate 292 serves as the catalytic Proton acceptor. The active site involves lysine 366. Cysteine 416 acts as the Nucleophile in catalysis.

It belongs to the CN hydrolase family. Apolipoprotein N-acyltransferase subfamily.

The protein resides in the cell inner membrane. The catalysed reaction is N-terminal S-1,2-diacyl-sn-glyceryl-L-cysteinyl-[lipoprotein] + a glycerophospholipid = N-acyl-S-1,2-diacyl-sn-glyceryl-L-cysteinyl-[lipoprotein] + a 2-acyl-sn-glycero-3-phospholipid + H(+). Its pathway is protein modification; lipoprotein biosynthesis (N-acyl transfer). Functionally, catalyzes the phospholipid dependent N-acylation of the N-terminal cysteine of apolipoprotein, the last step in lipoprotein maturation. This chain is Apolipoprotein N-acyltransferase, found in Bordetella bronchiseptica (strain ATCC BAA-588 / NCTC 13252 / RB50) (Alcaligenes bronchisepticus).